Here is a 101-residue protein sequence, read N- to C-terminus: ACFIRNCPKGGKRNVDEGPTKPCMFCSFGQCVAPHTCCGEKGCEMGTVDANMCQEENESPIPCHVFGKRCLLNHPGNSHGNCVTYGICCSHDTCTVHLACM.

Ala1 is a signal peptide. Cys2 and Cys7 are joined by a disulfide. Gly10 carries the post-translational modification Glycine amide. Residues 11 to 18 (GKRNVDEG) constitute a propeptide that is removed on maturation. Disulfide bonds link Cys23-Cys63, Cys26-Cys37, Cys31-Cys53, Cys38-Cys43, Cys70-Cys88, Cys82-Cys100, and Cys89-Cys94.

Belongs to the vasopressin/oxytocin family. As to expression, expressed by the venom gland.

Its subcellular location is the secreted. Targets vasopressin-oxytocin related receptors. Is more active on fish receptors than on their human counterparts, supporting an evolved role of this conopressin in the envenomation process. Acts as an agonist on zebrafish vasopressin receptors V1a1R (EC(50)=10.6 nM), V1a2R (EC(50)=44.06 nM, partial agonist), V2R (EC(50)=299.2 nM) and oxytocin receptor (EC(50)=353.73 nM, partial agonist). Shows a weaker activity on human receptors AVPR1B (EC(50)=51.92 nM), AVPR1A (EC(50)=123.78 nM), AVPR2 (EC(50)=299.2 nM) and oxytocin (OXTR) receptor (EC(50)=455.66 nM, partial agonist). In vivo, exhibits grooming and scratching behavior in mice, following intracerebral injection. This Conus monile (Necklace cone) protein is Conopressin/conophysin, isoform 3.